The following is a 575-amino-acid chain: Protein NRT1/ PTR FAMILY 5.6 (575 aa).

A run of 2 helical transmembrane segments spans residues 44–64 and 88–108; these read AALF…GLAT and WSGV…AYLG. Phosphothreonine is present on threonine 112. A run of 10 helical transmembrane segments spans residues 113 to 133, 153 to 173, 195 to 215, 223 to 243, 339 to 359, 375 to 395, 420 to 440, 457 to 477, 493 to 513, and 541 to 561; these read VLVA…SWFI, VAFF…KPSL, FFNW…TAVA, WGVA…IFFI, LIIN…CATQ, IGGF…TLII, ILQR…IAAL, VIWL…TLVG, LGIA…NLLI, and FYWF…IVAK.

It belongs to the major facilitator superfamily. Proton-dependent oligopeptide transporter (POT/PTR) (TC 2.A.17) family. In terms of tissue distribution, expressed in stems, shoots, leaves, flowers and siliques.

The protein localises to the membrane. This chain is Protein NRT1/ PTR FAMILY 5.6 (NPF5.6), found in Arabidopsis thaliana (Mouse-ear cress).